The primary structure comprises 728 residues: MSSRIDRDVINALIAGHFADPFSVLGMHQTQAGLEVRALLPDATDVWVIEPKTGRKVGKLECLDARGFFCGVLPRRKNFFRYQLAVVWHGQQNLIDDPYRFGPLIQEMDAWLLSEGTHLRPYETLGAHADTMDGVTGTRFSVWAPNARRVSVVGQFNYWDGRRHPMRLRKESGIWELFIPGAHNGQLYKFELLDANGNLRIKADPYAFEAQMRPETASMICGLPEKVTQSEERQKANQFDAPISIYEVHLGSWRRHTDNNFWLSYRELADQLVPYAKWMGFTHLELLPVNEHPFDGSWGYQPTGLYAPTRRFGTRDDFRYFINAAHAAGLNVILDWVPGHFPSDDFSLAEFDGTHLYEHSDPREGYHQDWNTLIYNYGRREVSNYLVGNALYWMERFGIDALRVDAVASMIYRDYSRKEGEWIPNEFGGRENLEAIEFLRNTNRIIGEQVPGAVSMAEESTDFSGVTRPPETGGLGFWFKWNLGWMHDTLDYMKLDPVYRQYHHDKLTFGMLYNHTENFVLPLSHDEVVHGKKSILDRMPGDAWQKFANLRAYYGWMWAFPGKKLLFMGNEFAQGREWNHDASLDWHLLEGGDNWHHGVQRLVRDLNHTYRHHKALHELDFDAYGFEWLVVDDNERSVLIFVRRDKAGNEIIVASNFTPVPRYDYRFGVNQPGRWREILNTDSMHYHGSNTGNGGVVHSDEIESHGRQHSLRLTLPPLATIWLMREGE.

Catalysis depends on Asp405, which acts as the Nucleophile. The active-site Proton donor is the Glu458.

It belongs to the glycosyl hydrolase 13 family. GlgB subfamily. As to quaternary structure, monomer.

It carries out the reaction Transfers a segment of a (1-&gt;4)-alpha-D-glucan chain to a primary hydroxy group in a similar glucan chain.. The protein operates within glycan biosynthesis; glycogen biosynthesis. Catalyzes the formation of the alpha-1,6-glucosidic linkages in glycogen by scission of a 1,4-alpha-linked oligosaccharide from growing alpha-1,4-glucan chains and the subsequent attachment of the oligosaccharide to the alpha-1,6 position. The chain is 1,4-alpha-glucan branching enzyme GlgB from Salmonella arizonae (strain ATCC BAA-731 / CDC346-86 / RSK2980).